The sequence spans 714 residues: DNA ligase (714 aa).

Residues 59–63 (DYEYD), 108–109 (SL), and Glu-139 each bind NAD(+). Lys-141 functions as the N6-AMP-lysine intermediate in the catalytic mechanism. Arg-162, Glu-200, Lys-325, and Lys-349 together coordinate NAD(+). Residues Cys-443, Cys-446, Cys-461, and Cys-466 each contribute to the Zn(2+) site. Residues 624 to 713 (VVENIFEGKT…IPDDLKDKVH (90 aa)) enclose the BRCT domain.

The protein belongs to the NAD-dependent DNA ligase family. LigA subfamily. Mg(2+) is required as a cofactor. Requires Mn(2+) as cofactor.

It carries out the reaction NAD(+) + (deoxyribonucleotide)n-3'-hydroxyl + 5'-phospho-(deoxyribonucleotide)m = (deoxyribonucleotide)n+m + AMP + beta-nicotinamide D-nucleotide.. Functionally, DNA ligase that catalyzes the formation of phosphodiester linkages between 5'-phosphoryl and 3'-hydroxyl groups in double-stranded DNA using NAD as a coenzyme and as the energy source for the reaction. It is essential for DNA replication and repair of damaged DNA. The sequence is that of DNA ligase from Persephonella marina (strain DSM 14350 / EX-H1).